A 771-amino-acid chain; its full sequence is Choline transporter-like protein 1 (771 aa).

The helical transmembrane segment at 96–116 (FLFFVFLCGWVVVAGFGIMWG) threads the bilayer. N-linked (GlcNAc...) asparagine glycosylation is found at Asn141 and Asn259. 4 helical membrane passes run 312-332 (WWQT…WTVI), 335-355 (LLGS…LGFG), 392-412 (LVVA…ILFI), and 441-461 (LFPF…AIWL). Asn480 carries N-linked (GlcNAc...) asparagine glycosylation. 5 helical membrane-spanning segments follow: residues 514-534 (LFAF…ALAG), 566-586 (LGSI…RVLL), 603-623 (WFLM…KFLT), 662-682 (AGIL…ILSF), and 701-721 (YYFV…DLFF).

This sequence belongs to the CTL (choline transporter-like) family.

The protein resides in the membrane. The polypeptide is Choline transporter-like protein 1 (chtl-1) (Caenorhabditis elegans).